Here is a 265-residue protein sequence, read N- to C-terminus: Neutrophil elastase (265 aa).

A signal peptide spans 1–26; the sequence is MALGRLSSRTLAAMLLALFLGGPALA. A Peptidase S1 domain is found at 29-247; that stretch reads IVGGRPARPH…FADWINSIIR (219 aa). C54 and C70 form a disulfide bridge. Catalysis depends on charge relay system residues H69 and D116. N-linked (GlcNAc...) asparagine glycosylation is found at N123 and N172. 3 disulfide bridges follow: C150/C208, C180/C187, and C198/C223. The active-site Charge relay system is the S202.

This sequence belongs to the peptidase S1 family. Elastase subfamily. Interacts with NOTCH2NL.

The catalysed reaction is Hydrolysis of proteins, including elastin. Preferential cleavage: Val-|-Xaa &gt; Ala-|-Xaa.. Serine protease that modifies the functions of natural killer cells, monocytes and granulocytes. Inhibits C5a-dependent neutrophil enzyme release and chemotaxis. Promotes blood coagulation. Through the activation of the platelet fibrinogen receptor integrin alpha-IIb/beta-3, potentiates platelet aggregation induced by a threshold concentration of cathepsin G (CTSG). Cleaves and thus inactivates tissue factor pathway inhibitor (TFPI). Capable of killing E.coli; probably digests outer membrane protein A (ompA) in E.coli. This Mus musculus (Mouse) protein is Neutrophil elastase (Elane).